The sequence spans 209 residues: Kynurenine formamidase (209 aa).

W20 is a substrate binding site. Residues H50, H54, and D56 each coordinate Zn(2+). Catalysis depends on H60, which acts as the Proton donor/acceptor. Zn(2+) contacts are provided by H161 and E173.

Belongs to the Cyclase 1 superfamily. KynB family. As to quaternary structure, homodimer. Zn(2+) is required as a cofactor.

It catalyses the reaction N-formyl-L-kynurenine + H2O = L-kynurenine + formate + H(+). Its pathway is amino-acid degradation; L-tryptophan degradation via kynurenine pathway; L-kynurenine from L-tryptophan: step 2/2. In terms of biological role, catalyzes the hydrolysis of N-formyl-L-kynurenine to L-kynurenine, the second step in the kynurenine pathway of tryptophan degradation. In Bacillus mycoides (strain KBAB4) (Bacillus weihenstephanensis), this protein is Kynurenine formamidase.